The sequence spans 806 residues: Glycerol-3-phosphate acyltransferase (806 aa).

Positions 305–310 (CHRSHM) match the HXXXXD motif motif.

The protein belongs to the GPAT/DAPAT family.

It localises to the cell inner membrane. It catalyses the reaction sn-glycerol 3-phosphate + an acyl-CoA = a 1-acyl-sn-glycero-3-phosphate + CoA. The protein operates within phospholipid metabolism; CDP-diacylglycerol biosynthesis; CDP-diacylglycerol from sn-glycerol 3-phosphate: step 1/3. The sequence is that of Glycerol-3-phosphate acyltransferase from Escherichia fergusonii (strain ATCC 35469 / DSM 13698 / CCUG 18766 / IAM 14443 / JCM 21226 / LMG 7866 / NBRC 102419 / NCTC 12128 / CDC 0568-73).